Reading from the N-terminus, the 529-residue chain is Zinc finger CCCH domain-containing protein 65 (529 aa).

Over residues 1-10 the composition is skewed to basic and acidic residues; the sequence is MADADARAPP. Disordered regions lie at residues 1-36 and 134-179; these read MADADARAPPKSDPGATPIGSISPSSAAPAAGEDEV and PARK…GSYV. Over residues 14–31 the composition is skewed to low complexity; it reads PGATPIGSISPSSAAPAA. 3 consecutive C3H1-type zinc fingers follow at residues 108–136, 237–265, and 285–313; these read RPGEPDCTYYVKFGSCRFGMKCKFNHPAR, GSSQEECKYYSTPGGCKFGKACKYLHRDG, and RPGEKECPYYMRTGSCKYATNCKFHHPDP. The interval 313 to 347 is disordered; sequence PSNVASKDPQLEHENGDAPQQDVQGSSSQPNASIW. Positions 333 to 344 are enriched in polar residues; the sequence is QDVQGSSSQPNA. 2 consecutive C3H1-type zinc fingers follow at residues 433-461 and 477-505; these read RPGQPECQHFVKSGFCKFRMKCKYHHPRS and KPDQPVCTYYGRYGVCKFGPACAYNHPFN.

The chain is Zinc finger CCCH domain-containing protein 65 from Oryza sativa subsp. japonica (Rice).